The sequence spans 324 residues: Tubulin alpha-8 chain (324 aa).

GTP contacts are provided by Ser-15, Gly-19, Thr-20, Thr-54, Asn-81, and Asn-103. The active site involves Glu-129.

Belongs to the tubulin family. Dimer of alpha and beta chains. A typical microtubule is a hollow water-filled tube with an outer diameter of 25 nm and an inner diameter of 15 nM. Alpha-beta heterodimers associate head-to-tail to form protofilaments running lengthwise along the microtubule wall with the beta-tubulin subunit facing the microtubule plus end conferring a structural polarity. Microtubules usually have 13 protofilaments but different protofilament numbers can be found in some organisms and specialized cells. Requires Mg(2+) as cofactor. Some glutamate residues at the C-terminus are polyglycylated, resulting in polyglycine chains on the gamma-carboxyl group. Glycylation is mainly limited to tubulin incorporated into axonemes (cilia and flagella) whereas glutamylation is prevalent in neuronal cells, centrioles, axonemes, and the mitotic spindle. Both modifications can coexist on the same protein on adjacent residues, and lowering polyglycylation levels increases polyglutamylation, and reciprocally. The precise function of polyglycylation is still unclear. In terms of processing, some glutamate residues at the C-terminus are polyglutamylated, resulting in polyglutamate chains on the gamma-carboxyl group. Polyglutamylation plays a key role in microtubule severing by spastin (SPAST). SPAST preferentially recognizes and acts on microtubules decorated with short polyglutamate tails: severing activity by SPAST increases as the number of glutamates per tubulin rises from one to eight, but decreases beyond this glutamylation threshold.

It localises to the cytoplasm. The protein resides in the cytoskeleton. The catalysed reaction is GTP + H2O = GDP + phosphate + H(+). Its function is as follows. Tubulin is the major constituent of microtubules, a cylinder consisting of laterally associated linear protofilaments composed of alpha- and beta-tubulin heterodimers. Microtubules grow by the addition of GTP-tubulin dimers to the microtubule end, where a stabilizing cap forms. Below the cap, tubulin dimers are in GDP-bound state, owing to GTPase activity of alpha-tubulin. The sequence is that of Tubulin alpha-8 chain from Gallus gallus (Chicken).